Consider the following 391-residue polypeptide: Casein kinase II subunit alpha (391 aa).

Positions 36–41 (QDDYQL) are interaction with beta subunit. One can recognise a Protein kinase domain in the interval 39–324 (YQLVRKLGRG…AREAMEHPYF (286 aa)). Residues 45 to 53 (LGRGKYSEV) and lysine 68 each bind ATP. Aspartate 156 acts as the Proton acceptor in catalysis. Threonine 344 and threonine 360 each carry phosphothreonine; by CDK1. Phosphoserine; by CDK1 occurs at positions 362 and 370.

Belongs to the protein kinase superfamily. Ser/Thr protein kinase family. CK2 subfamily. As to quaternary structure, heterotetramer composed of two catalytic subunits (alpha chain and/or alpha' chain) and two regulatory subunits (beta chains). The tetramer can exist as a combination of 2 alpha/2 beta, 2 alpha'/2 beta or 1 alpha/1 alpha'/2 beta subunits. Also part of a CK2-SPT16-SSRP1 complex composed of SSRP1, SUPT16H, CSNK2A1, CSNK2A2 and CSNK2B, which forms following UV irradiation. Interacts with RNPS1. Interacts with SNAI1. Interacts with PML. Interacts with CCAR2. Interacts with HIRIP3. Phosphorylated at Thr-344, Thr-360, Ser-362 and Ser-370 by CDK1 in prophase and metaphase and dephosphorylated during anaphase. Phosphorylation does not directly affect casein kinase 2 activity, but may contribute to its regulation by forming binding sites for interacting proteins and/or targeting it to different compartments.

It localises to the nucleus. It carries out the reaction L-seryl-[protein] + ATP = O-phospho-L-seryl-[protein] + ADP + H(+). It catalyses the reaction L-threonyl-[protein] + ATP = O-phospho-L-threonyl-[protein] + ADP + H(+). Constitutively active protein kinase whose activity is not directly affected by phosphorylation. Seems to be regulated by level of expression and localization. In terms of biological role, catalytic subunit of a constitutively active serine/threonine-protein kinase complex that phosphorylates a large number of substrates containing acidic residues C-terminal to the phosphorylated serine or threonine. Regulates numerous cellular processes, such as cell cycle progression, apoptosis and transcription, as well as viral infection. May act as a regulatory node which integrates and coordinates numerous signals leading to an appropriate cellular response. During mitosis, functions as a component of the p53/TP53-dependent spindle assembly checkpoint (SAC) that maintains cyclin-B-CDK1 activity and G2 arrest in response to spindle damage. Also required for p53/TP53-mediated apoptosis, phosphorylating 'Ser-392' of p53/TP53 following UV irradiation. Phosphorylates a number of DNA repair proteins in response to DNA damage, such as MDC1, MRE11, RAD9A, RAD51 and HTATSF1, promoting their recruitment to DNA damage sites. Can also negatively regulate apoptosis. Phosphorylates the caspases CASP9 and CASP2 and the apoptotic regulator NOL3. Phosphorylation protects CASP9 from cleavage and activation by CASP8, and inhibits the dimerization of CASP2 and activation of CASP8. Phosphorylates YY1, protecting YY1 from cleavage by CASP7 during apoptosis. Regulates transcription by direct phosphorylation of RNA polymerases I, II, III and IV. Also phosphorylates and regulates numerous transcription factors including NF-kappa-B, STAT1, CREB1, IRF1, IRF2, ATF1, ATF4, SRF, MAX, JUN, FOS, MYC and MYB. Phosphorylates Hsp90 and its co-chaperones FKBP4 and CDC37, which is essential for chaperone function. Mediates sequential phosphorylation of FNIP1, promoting its gradual interaction with Hsp90, leading to activate both kinase and non-kinase client proteins of Hsp90. Regulates Wnt signaling by phosphorylating CTNNB1 and the transcription factor LEF1. Acts as an ectokinase that phosphorylates several extracellular proteins. Plays an important role in the circadian clock function by phosphorylating BMAL1 at 'Ser-90' which is pivotal for its interaction with CLOCK and which controls CLOCK nuclear entry. Phosphorylates FMR1, promoting FMR1-dependent formation of a membraneless compartment. May phosphorylate histone H2A on 'Ser-1'. In Bos taurus (Bovine), this protein is Casein kinase II subunit alpha (CSNK2A1).